We begin with the raw amino-acid sequence, 522 residues long: Stellatic acid synthase (522 aa).

A helical transmembrane segment spans residues 23–43 (IYGIYEPLLALFAVYSVAVVV). Residues Asn267 and Asn451 are each glycosylated (N-linked (GlcNAc...) asparagine). Residue Cys464 participates in heme binding. Residue Asn495 is glycosylated (N-linked (GlcNAc...) asparagine).

Belongs to the cytochrome P450 family. Heme serves as cofactor.

It is found in the membrane. It carries out the reaction stellata-2,6,19-triene + 3 reduced [NADPH--hemoprotein reductase] + 3 O2 = stellatate + 3 oxidized [NADPH--hemoprotein reductase] + 4 H2O + 4 H(+). It functions in the pathway secondary metabolite biosynthesis; terpenoid biosynthesis. Its function is as follows. Cytochrome P450 monooxygenase; part of the gene cluster that mediates the biosynthesis of the sesterterpene stellatic acid. The first step in the pathway is performed by the stellatatriene synthase that possesses both prenyl transferase and terpene cyclase activity, converting isopentenyl diphosphate and dimethylallyl diphosphate into geranylgeranyl diphosphate (GGDP) and then converting GGDP into stellata-2,6,19-triene. The cytochrome P450 monooxygenase Stl-P450 then catalyzes three successive oxidation reactions on the C-20 methyl group to generate the carboxylic acid of stellatic acid. In Emericella variicolor (Aspergillus stellatus), this protein is Stellatic acid synthase.